The sequence spans 209 residues: Ras-like protein (209 aa).

Position 10–17 (10–17 (GGGLVGKS)) interacts with GTP. An Effector region motif is present at residues 55-63 (YDPTVEDSR). The residue at position 58 (threonine 58) is a Phosphothreonine. Residues 79–83 (DTAGQ) and 140–143 (NKAD) each bind GTP. The residue at position 206 (cysteine 206) is a Cysteine methyl ester. Residue cysteine 206 is the site of S-geranylgeranyl cysteine attachment. Positions 207–209 (LII) are cleaved as a propeptide — removed in mature form.

This sequence belongs to the small GTPase superfamily. Ras family. Post-translationally, phosphorylated in the presence of insulin.

Its subcellular location is the cell membrane. It carries out the reaction GTP + H2O = GDP + phosphate + H(+). With respect to regulation, alternates between an inactive form bound to GDP and an active form bound to GTP. Activated by a guanine nucleotide-exchange factor (GEF) and inactivated by a GTPase-activating protein (GAP). Its function is as follows. This protein is activated by the insulin/insulin (insulin-like)-receptor system. This transition enables the ras protein to interact with the lectin-receptor/lectin complex, a process which ultimately lead to an initiation of an intra-cellular signal-transduction chain. This Geodia cydonium (Sponge) protein is Ras-like protein.